We begin with the raw amino-acid sequence, 518 residues long: D-aminopeptidase (518 aa).

Residue serine 62 is the Nucleophile of the active site. Lysine 65 functions as the Proton donor/acceptor in the catalytic mechanism. Positions 477–487 are important for specificity; sequence QRSMDAPSPGE. A substrate-binding site is contributed by aspartate 481.

It belongs to the peptidase S12 family. As to quaternary structure, homodimer.

It catalyses the reaction Release of an N-terminal D-amino acid from a peptide, Xaa-|-Yaa-, in which Xaa is preferably D-Ala, D-Ser or D-Thr. D-amino acid amides and methyl esters also are hydrolyzed, as is glycine amide.. Its activity is regulated as follows. Inhibited by beta-lactam compounds such as 6-aminopenicillic acid, 7-aminocephalosporanic acid, benzylpenicillin and ampicillin. Inhibited by p-chloromercuribenzoate. Its function is as follows. Hydrolyzes N-terminal residues in D-amino acid-containing peptides. This is D-aminopeptidase from Brucella abortus (strain S19).